A 440-amino-acid chain; its full sequence is Xylose isomerase (440 aa).

Catalysis depends on residues His-99 and Asp-102. 7 residues coordinate Mg(2+): Glu-230, Glu-266, His-269, Asp-294, Asp-305, Asp-307, and Asp-337.

Belongs to the xylose isomerase family. As to quaternary structure, homotetramer. Mg(2+) is required as a cofactor.

It localises to the cytoplasm. It carries out the reaction alpha-D-xylose = alpha-D-xylulofuranose. This is Xylose isomerase from Halalkalibacterium halodurans (strain ATCC BAA-125 / DSM 18197 / FERM 7344 / JCM 9153 / C-125) (Bacillus halodurans).